Here is a 759-residue protein sequence, read N- to C-terminus: 1,4-alpha-glucan branching enzyme GlgB (759 aa).

The tract at residues 1–21 is disordered; sequence MAKTKGLPKDTAVTPSPHLRP. Residue Asp-422 is the Nucleophile of the active site. Residue Glu-475 is the Proton donor of the active site.

This sequence belongs to the glycosyl hydrolase 13 family. GlgB subfamily. Monomer.

The catalysed reaction is Transfers a segment of a (1-&gt;4)-alpha-D-glucan chain to a primary hydroxy group in a similar glucan chain.. Its pathway is glycan biosynthesis; glycogen biosynthesis. Catalyzes the formation of the alpha-1,6-glucosidic linkages in glycogen by scission of a 1,4-alpha-linked oligosaccharide from growing alpha-1,4-glucan chains and the subsequent attachment of the oligosaccharide to the alpha-1,6 position. The protein is 1,4-alpha-glucan branching enzyme GlgB of Mycobacterium sp. (strain JLS).